The following is a 542-amino-acid chain: Chaperonin GroEL (542 aa).

Residues 29 to 32 (TLGP), 86 to 90 (DGTTT), Gly-413, 476 to 478 (NAA), and Asp-492 each bind ATP. The segment at 521–542 (QPDENGPAAGPDMGMGGMGGMM) is disordered. Residues 533–542 (MGMGGMGGMM) are compositionally biased toward gly residues.

It belongs to the chaperonin (HSP60) family. As to quaternary structure, forms a cylinder of 14 subunits composed of two heptameric rings stacked back-to-back. Interacts with the co-chaperonin GroES.

Its subcellular location is the cytoplasm. It carries out the reaction ATP + H2O + a folded polypeptide = ADP + phosphate + an unfolded polypeptide.. Together with its co-chaperonin GroES, plays an essential role in assisting protein folding. The GroEL-GroES system forms a nano-cage that allows encapsulation of the non-native substrate proteins and provides a physical environment optimized to promote and accelerate protein folding. The polypeptide is Chaperonin GroEL (Listeria innocua serovar 6a (strain ATCC BAA-680 / CLIP 11262)).